The primary structure comprises 85 residues: Large ribosomal subunit protein bL27 (85 aa).

Positions 1-26 are disordered; it reads MAHKKGVGSSRNGRDSNPKMLGVKRF.

This sequence belongs to the bacterial ribosomal protein bL27 family.

The protein is Large ribosomal subunit protein bL27 of Roseiflexus sp. (strain RS-1).